Here is a 271-residue protein sequence, read N- to C-terminus: Formamidopyrimidine-DNA glycosylase (271 aa).

The active-site Schiff-base intermediate with DNA is Pro-2. Glu-3 (proton donor) is an active-site residue. Lys-56 functions as the Proton donor; for beta-elimination activity in the catalytic mechanism. DNA-binding residues include His-89, Arg-107, and Lys-151. Residues 236–270 (NVYGRAGLPCRQCGTPVRLLRQGQRSTYFCPHCQR) form an FPG-type zinc finger. Catalysis depends on Arg-260, which acts as the Proton donor; for delta-elimination activity.

Belongs to the FPG family. Monomer. Zn(2+) serves as cofactor.

The enzyme catalyses Hydrolysis of DNA containing ring-opened 7-methylguanine residues, releasing 2,6-diamino-4-hydroxy-5-(N-methyl)formamidopyrimidine.. It catalyses the reaction 2'-deoxyribonucleotide-(2'-deoxyribose 5'-phosphate)-2'-deoxyribonucleotide-DNA = a 3'-end 2'-deoxyribonucleotide-(2,3-dehydro-2,3-deoxyribose 5'-phosphate)-DNA + a 5'-end 5'-phospho-2'-deoxyribonucleoside-DNA + H(+). Involved in base excision repair of DNA damaged by oxidation or by mutagenic agents. Acts as a DNA glycosylase that recognizes and removes damaged bases. Has a preference for oxidized purines, such as 7,8-dihydro-8-oxoguanine (8-oxoG). Has AP (apurinic/apyrimidinic) lyase activity and introduces nicks in the DNA strand. Cleaves the DNA backbone by beta-delta elimination to generate a single-strand break at the site of the removed base with both 3'- and 5'-phosphates. This is Formamidopyrimidine-DNA glycosylase from Acidovorax sp. (strain JS42).